Here is a 101-residue protein sequence, read N- to C-terminus: Small ribosomal subunit protein uS14 (101 aa).

This sequence belongs to the universal ribosomal protein uS14 family. Part of the 30S ribosomal subunit. Contacts proteins S3 and S10.

In terms of biological role, binds 16S rRNA, required for the assembly of 30S particles and may also be responsible for determining the conformation of the 16S rRNA at the A site. This Pseudoalteromonas translucida (strain TAC 125) protein is Small ribosomal subunit protein uS14.